A 264-amino-acid polypeptide reads, in one-letter code: Undecaprenyl-diphosphatase (264 aa).

Transmembrane regions (helical) follow at residues Val7–His27, Leu39–Tyr59, Ile89–Phe109, Leu112–Leu132, Ile145–Ser165, Ser182–Leu202, Met212–Phe232, and Ser244–Phe264.

This sequence belongs to the UppP family.

Its subcellular location is the cell inner membrane. The catalysed reaction is di-trans,octa-cis-undecaprenyl diphosphate + H2O = di-trans,octa-cis-undecaprenyl phosphate + phosphate + H(+). Catalyzes the dephosphorylation of undecaprenyl diphosphate (UPP). Confers resistance to bacitracin. In Borrelia hermsii (strain HS1 / DAH), this protein is Undecaprenyl-diphosphatase.